The primary structure comprises 85 residues: Large ribosomal subunit protein bL31B (85 aa).

Belongs to the bacterial ribosomal protein bL31 family. Type B subfamily. As to quaternary structure, part of the 50S ribosomal subunit.

The protein is Large ribosomal subunit protein bL31B of Clavibacter michiganensis subsp. michiganensis (strain NCPPB 382).